Consider the following 398-residue polypeptide: 1-deoxy-D-xylulose 5-phosphate reductoisomerase (398 aa).

Positions 10, 11, 12, 13, 36, 37, 38, and 124 each coordinate NADPH. K125 is a binding site for 1-deoxy-D-xylulose 5-phosphate. E126 serves as a coordination point for NADPH. A Mn(2+)-binding site is contributed by D150. S151, E152, S186, and H209 together coordinate 1-deoxy-D-xylulose 5-phosphate. E152 contacts Mn(2+). G215 is an NADPH binding site. The 1-deoxy-D-xylulose 5-phosphate site is built by S222, N227, K228, and E231. E231 serves as a coordination point for Mn(2+).

This sequence belongs to the DXR family. Homodimer. Requires Mg(2+) as cofactor. The cofactor is Mn(2+).

It catalyses the reaction 2-C-methyl-D-erythritol 4-phosphate + NADP(+) = 1-deoxy-D-xylulose 5-phosphate + NADPH + H(+). The protein operates within isoprenoid biosynthesis; isopentenyl diphosphate biosynthesis via DXP pathway; isopentenyl diphosphate from 1-deoxy-D-xylulose 5-phosphate: step 1/6. Functionally, catalyzes the NADPH-dependent rearrangement and reduction of 1-deoxy-D-xylulose-5-phosphate (DXP) to 2-C-methyl-D-erythritol 4-phosphate (MEP). The protein is 1-deoxy-D-xylulose 5-phosphate reductoisomerase of Escherichia coli O157:H7.